A 260-amino-acid polypeptide reads, in one-letter code: UPF0246 protein BTH_I1090 (260 aa).

This sequence belongs to the UPF0246 family.

The chain is UPF0246 protein BTH_I1090 from Burkholderia thailandensis (strain ATCC 700388 / DSM 13276 / CCUG 48851 / CIP 106301 / E264).